Consider the following 91-residue polypeptide: Small ribosomal subunit protein bS18 (91 aa).

The protein belongs to the bacterial ribosomal protein bS18 family. As to quaternary structure, part of the 30S ribosomal subunit. Forms a tight heterodimer with protein bS6.

Functionally, binds as a heterodimer with protein bS6 to the central domain of the 16S rRNA, where it helps stabilize the platform of the 30S subunit. In Syntrophotalea carbinolica (strain DSM 2380 / NBRC 103641 / GraBd1) (Pelobacter carbinolicus), this protein is Small ribosomal subunit protein bS18.